Consider the following 151-residue polypeptide: Endoribonuclease YbeY (151 aa).

Positions 108, 112, and 118 each coordinate Zn(2+).

It belongs to the endoribonuclease YbeY family. It depends on Zn(2+) as a cofactor.

The protein resides in the cytoplasm. Single strand-specific metallo-endoribonuclease involved in late-stage 70S ribosome quality control and in maturation of the 3' terminus of the 16S rRNA. This is Endoribonuclease YbeY from Porphyromonas gingivalis (strain ATCC 33277 / DSM 20709 / CIP 103683 / JCM 12257 / NCTC 11834 / 2561).